Consider the following 487-residue polypeptide: Glutamyl-tRNA(Gln) amidotransferase subunit A (487 aa).

Active-site charge relay system residues include Lys-74 and Ser-149. Ser-173 serves as the catalytic Acyl-ester intermediate.

The protein belongs to the amidase family. GatA subfamily. As to quaternary structure, heterotrimer of A, B and C subunits.

It carries out the reaction L-glutamyl-tRNA(Gln) + L-glutamine + ATP + H2O = L-glutaminyl-tRNA(Gln) + L-glutamate + ADP + phosphate + H(+). Functionally, allows the formation of correctly charged Gln-tRNA(Gln) through the transamidation of misacylated Glu-tRNA(Gln) in organisms which lack glutaminyl-tRNA synthetase. The reaction takes place in the presence of glutamine and ATP through an activated gamma-phospho-Glu-tRNA(Gln). The chain is Glutamyl-tRNA(Gln) amidotransferase subunit A from Synechococcus sp. (strain WH7803).